A 167-amino-acid polypeptide reads, in one-letter code: Novel acetylcholine receptor chaperone (167 aa).

Over Met1–Arg5 the chain is Cytoplasmic. A helical transmembrane segment spans residues Thr6 to Ile26. The Lumenal portion of the chain corresponds to Lys27–Ser61. Residues Ala43–Leu54 form an interaction with NGFR region. The helical transmembrane segment at Ile62–Val82 threads the bilayer. Topologically, residues Pro83–Asp88 are cytoplasmic. The chain crosses the membrane as a helical span at residues Val89 to Gly109. Over Asp110–Arg114 the chain is Lumenal. A helical transmembrane segment spans residues Tyr115–Ala132. Over Arg133–Ser167 the chain is Cytoplasmic. The tract at residues Glu136–Ser167 is disordered.

It belongs to the DoxX family. As to quaternary structure, may interact with NGFR. Interacts with RPN1, RPN2 and CANX.

Its subcellular location is the peroxisome membrane. The protein localises to the cytoplasmic vesicle. The protein resides in the endoplasmic reticulum membrane. Its function is as follows. Molecular chaperone which mediates the proper assembly and functional expression of the nicotinic acetylcholine receptors (nAChRs) throughout the brain. Essential for the proper folding, assembly, function and surface trafficking of alpha-7 (CHRNA7), alpha-4-beta-2, alpha-3-beta-2 and alpha-3-beta-4 receptors. Stably associates with ribophorin-1 (RPN1) and ribophorin-2 (RPN2) (components of the oligosaccharyl transferase (OST) complex) and with calnexin (CANX), both of which are critical for NACHO-mediated effects on CHRNA7 assembly and function. Facilitates the proper folding and assembly of alpha-6-beta-2 and alpha-6-beta-2-beta-3 receptors and acts at early stages of the nAChRs subunit assembly. Promotes the expression of the alpha-4(2):beta-2(3) stoichiometric form over the alpha-4(3):beta-2(2) form. This chain is Novel acetylcholine receptor chaperone (TMEM35A), found in Macaca fascicularis (Crab-eating macaque).